The primary structure comprises 439 residues: Aspartate--tRNA(Asp/Asn) ligase (439 aa).

Position 177 (Glu-177) interacts with L-aspartate. The segment at 199–202 (QLYK) is aspartate. L-aspartate is bound at residue Arg-221. ATP is bound by residues 221-223 (RAE), 229-231 (RHL), and Glu-362. 2 residues coordinate Mg(2+): Glu-362 and Ser-365. L-aspartate is bound by residues Ser-365 and Arg-369. 410 to 413 (GADR) is an ATP binding site.

Belongs to the class-II aminoacyl-tRNA synthetase family. Type 2 subfamily. Homodimer. It depends on Mg(2+) as a cofactor.

The protein resides in the cytoplasm. It carries out the reaction tRNA(Asx) + L-aspartate + ATP = L-aspartyl-tRNA(Asx) + AMP + diphosphate. In terms of biological role, aspartyl-tRNA synthetase with relaxed tRNA specificity since it is able to aspartylate not only its cognate tRNA(Asp) but also tRNA(Asn). Reaction proceeds in two steps: L-aspartate is first activated by ATP to form Asp-AMP and then transferred to the acceptor end of tRNA(Asp/Asn). This is Aspartate--tRNA(Asp/Asn) ligase from Methanosphaera stadtmanae (strain ATCC 43021 / DSM 3091 / JCM 11832 / MCB-3).